The following is a 466-amino-acid chain: Soluble pyridine nucleotide transhydrogenase (466 aa).

36–45 provides a ligand contact to FAD; it reads ERYHNVGGGC.

The protein belongs to the class-I pyridine nucleotide-disulfide oxidoreductase family. Requires FAD as cofactor.

It localises to the cytoplasm. It catalyses the reaction NAD(+) + NADPH = NADH + NADP(+). In terms of biological role, conversion of NADPH, generated by peripheral catabolic pathways, to NADH, which can enter the respiratory chain for energy generation. The protein is Soluble pyridine nucleotide transhydrogenase of Salmonella paratyphi A (strain ATCC 9150 / SARB42).